We begin with the raw amino-acid sequence, 306 residues long: Ribosomal protein L11 methyltransferase (306 aa).

Residues threonine 154, glycine 179, aspartate 201, and asparagine 242 each coordinate S-adenosyl-L-methionine.

This sequence belongs to the methyltransferase superfamily. PrmA family.

The protein resides in the cytoplasm. It catalyses the reaction L-lysyl-[protein] + 3 S-adenosyl-L-methionine = N(6),N(6),N(6)-trimethyl-L-lysyl-[protein] + 3 S-adenosyl-L-homocysteine + 3 H(+). In terms of biological role, methylates ribosomal protein L11. The protein is Ribosomal protein L11 methyltransferase of Xanthomonas euvesicatoria pv. vesicatoria (strain 85-10) (Xanthomonas campestris pv. vesicatoria).